The chain runs to 355 residues: Guanine nucleotide-binding protein alpha-12 subunit (355 aa).

Residues 28 to 355 (RQINLLLLGS…EQNLKTLMMQ (328 aa)) form the G-alpha domain. A G1 motif region spans residues 31–44 (NLLLLGSGESGKST). Residues 36–43 (GSGESGKS), 176–182 (LFCRKAT), 201–205 (DVGGQ), 270–273 (NKND), and alanine 327 contribute to the GTP site. Residues serine 43 and threonine 182 each contribute to the Mg(2+) site. The tract at residues 174 to 182 (DILFCRKAT) is G2 motif. Residues 197–206 (FRFIDVGGQR) are G3 motif. Positions 266-273 (ILFMNKND) are G4 motif. Positions 325–330 (TTAVDT) are G5 motif.

This sequence belongs to the G-alpha family. As to quaternary structure, g proteins are composed of 3 units; alpha, beta and gamma. The alpha chain contains the guanine nucleotide binding site.

Guanine nucleotide-binding proteins (G proteins) are involved as modulators or transducers in various transmembrane signaling systems. May play a role in resistance to fungal infection in the epidermis by regulating the up-regulation of several antimicrobial peptides of the NLP and CNC families. Upstream of plc-3, egl-8, tpa-1 and the p38-like pathway, required for the expression of antimicrobial peptide nlp-29 in the epidermis in response to fungal infection or physical injury. The sequence is that of Guanine nucleotide-binding protein alpha-12 subunit (gpa-12) from Caenorhabditis briggsae.